The chain runs to 180 residues: Hypoxanthine-guanine phosphoribosyltransferase (180 aa).

Diphosphate contacts are provided by lysine 43 and glycine 44. Residues glutamate 99 and aspartate 100 each coordinate Mg(2+). Aspartate 103 functions as the Proton acceptor in the catalytic mechanism. GMP-binding positions include lysine 131, 152-153, and aspartate 159; that span reads FV. Diphosphate is bound at residue arginine 165.

Belongs to the purine/pyrimidine phosphoribosyltransferase family. It depends on Mg(2+) as a cofactor.

The protein localises to the cytoplasm. The enzyme catalyses IMP + diphosphate = hypoxanthine + 5-phospho-alpha-D-ribose 1-diphosphate. It carries out the reaction GMP + diphosphate = guanine + 5-phospho-alpha-D-ribose 1-diphosphate. It functions in the pathway purine metabolism; IMP biosynthesis via salvage pathway; IMP from hypoxanthine: step 1/1. It participates in purine metabolism; GMP biosynthesis via salvage pathway; GMP from guanine: step 1/1. Its function is as follows. Purine salvage pathway enzyme that catalyzes the transfer of the ribosyl-5-phosphate group from 5-phospho-alpha-D-ribose 1-diphosphate (PRPP) to the N9 position of the 6-oxopurines hypoxanthine and guanine to form the corresponding ribonucleotides IMP (inosine 5'-monophosphate) and GMP (guanosine 5'-monophosphate), with the release of PPi. The chain is Hypoxanthine-guanine phosphoribosyltransferase (hpt) from Streptococcus pneumoniae serotype 4 (strain ATCC BAA-334 / TIGR4).